We begin with the raw amino-acid sequence, 93 residues long: Small ribosomal subunit protein bS20 (93 aa).

Belongs to the bacterial ribosomal protein bS20 family.

Functionally, binds directly to 16S ribosomal RNA. This chain is Small ribosomal subunit protein bS20, found in Hydrogenobaculum sp. (strain Y04AAS1).